We begin with the raw amino-acid sequence, 160 residues long: Phosphopantetheine adenylyltransferase (160 aa).

Thr10 is a binding site for substrate. ATP contacts are provided by residues 10–11 (TF) and His18. The substrate site is built by Lys42, Leu74, and Arg88. ATP is bound by residues 89–91 (GLR), Glu99, and 124–130 (NSFISST).

This sequence belongs to the bacterial CoaD family. In terms of assembly, homohexamer. Mg(2+) is required as a cofactor.

The protein localises to the cytoplasm. It carries out the reaction (R)-4'-phosphopantetheine + ATP + H(+) = 3'-dephospho-CoA + diphosphate. Its pathway is cofactor biosynthesis; coenzyme A biosynthesis; CoA from (R)-pantothenate: step 4/5. Reversibly transfers an adenylyl group from ATP to 4'-phosphopantetheine, yielding dephospho-CoA (dPCoA) and pyrophosphate. The polypeptide is Phosphopantetheine adenylyltransferase (Aeromonas hydrophila subsp. hydrophila (strain ATCC 7966 / DSM 30187 / BCRC 13018 / CCUG 14551 / JCM 1027 / KCTC 2358 / NCIMB 9240 / NCTC 8049)).